The following is a 100-amino-acid chain: Urease subunit gamma (100 aa).

The protein belongs to the urease gamma subunit family. Heterotrimer of UreA (gamma), UreB (beta) and UreC (alpha) subunits. Three heterotrimers associate to form the active enzyme.

It localises to the cytoplasm. It carries out the reaction urea + 2 H2O + H(+) = hydrogencarbonate + 2 NH4(+). The protein operates within nitrogen metabolism; urea degradation; CO(2) and NH(3) from urea (urease route): step 1/1. This is Urease subunit gamma from Lysinibacillus sphaericus (strain C3-41).